The chain runs to 263 residues: Type III pantothenate kinase (263 aa).

Residue 14-21 (DIGNTSVN) participates in ATP binding. Position 115–118 (115–118 (GADR)) interacts with substrate. The active-site Proton acceptor is aspartate 117. Aspartate 137 contributes to the K(+) binding site. Residue threonine 140 coordinates ATP. Threonine 192 provides a ligand contact to substrate.

The protein belongs to the type III pantothenate kinase family. In terms of assembly, homodimer. It depends on NH4(+) as a cofactor. Requires K(+) as cofactor.

It localises to the cytoplasm. It catalyses the reaction (R)-pantothenate + ATP = (R)-4'-phosphopantothenate + ADP + H(+). Its pathway is cofactor biosynthesis; coenzyme A biosynthesis; CoA from (R)-pantothenate: step 1/5. Catalyzes the phosphorylation of pantothenate (Pan), the first step in CoA biosynthesis. In Dehalococcoides mccartyi (strain CBDB1), this protein is Type III pantothenate kinase.